The primary structure comprises 134 residues: Translation initiation factor 2 subunit beta (134 aa).

Positions Met1 to Glu12 are enriched in basic and acidic residues. The disordered stretch occupies residues Met1–Arg32.

It belongs to the eIF-2-beta/eIF-5 family. In terms of assembly, heterotrimer composed of an alpha, a beta and a gamma chain.

EIF-2 functions in the early steps of protein synthesis by forming a ternary complex with GTP and initiator tRNA. The polypeptide is Translation initiation factor 2 subunit beta (Natronomonas pharaonis (strain ATCC 35678 / DSM 2160 / CIP 103997 / JCM 8858 / NBRC 14720 / NCIMB 2260 / Gabara) (Halobacterium pharaonis)).